The following is a 400-amino-acid chain: MTRVVVIGSGFAGLWAALGAARRLDELAVPAGTVDVMVVSNKPFHDIRVRNYEADLSACRIPLGDVLGPAGVAHVTAEVTAIDADGRRVTTSTGASYSYDRLVLASGSHVVKPALPGLAEFGFDVDTYDGAVRLQQHLQGLAGGPLTSAAATVVVVGAGLTGIETACELPGRLHALFARGDGVTPRVVLIDHNPFVGSDMGLSARPVIEQALLDNGVETRTGVSVAAVSPGGVTLSSGERLAAATVVWCAGMRASRLTEQLPVARDRLGRLQVDDYLRVIGVPAMFAAGDVAAARMDDEHLSVMSCQHGRPMGRYAGCNVINDLFDQPLLALRIPWYVTVLDLGSAGAVYTEGWERKVVSQGAPAKTTKQSINTRRIYPPLNGSRADLLAAAAPRVQPRP.

The protein belongs to the NADH dehydrogenase family. Requires FAD as cofactor.

This chain is NADH dehydrogenase-like protein MT1860, found in Mycobacterium tuberculosis (strain CDC 1551 / Oshkosh).